The following is a 453-amino-acid chain: Asparagine--tRNA ligase (453 aa).

The protein belongs to the class-II aminoacyl-tRNA synthetase family. In terms of assembly, homodimer.

The protein localises to the cytoplasm. It catalyses the reaction tRNA(Asn) + L-asparagine + ATP = L-asparaginyl-tRNA(Asn) + AMP + diphosphate + H(+). The protein is Asparagine--tRNA ligase of Malacoplasma penetrans (strain HF-2) (Mycoplasma penetrans).